Consider the following 334-residue polypeptide: NmrA-like family domain-containing oxidoreductase lnaB (334 aa).

NADP(+) is bound by residues 12 to 17 (GGTGKQ), 38 to 42 (RNAQS), 59 to 60 (DG), 80 to 82 (INS), Lys138, and 162 to 165 (FLEN).

The protein belongs to the NmrA-type oxidoreductase family.

The protein operates within secondary metabolite biosynthesis. Its function is as follows. NmrA-like family domain-containing oxidoreductase; part of the lna gene cluster that mediates the biosynthesis of diastereomeric piperazines. Lna and lnb clusters encode sets of enzymes that produce overlapping sets of previously undescribed metabolites such as piperazinomycin-like metabolites or morpholine. The lna and lnb biosynthetic pathways appear to be part of a signaling network that controls the formation of sclerotia, a resilient overwintering structure. One primary function of the non-canonical nonribosomal peptide synthetases lnaA and lnbA consists in the reduction of L-tyrosine. The presence in the clusters of tailoring enzymes such as the oxidoreductases lnaB, lnbB, lnaE or lnbE, as well as of the cytochrome P450 monooxygenases lnaC, lnaD, or lnbC, might explain formation of various diastereomeric piperazines. This chain is NmrA-like family domain-containing oxidoreductase lnaB, found in Aspergillus flavus (strain ATCC 200026 / FGSC A1120 / IAM 13836 / NRRL 3357 / JCM 12722 / SRRC 167).